Reading from the N-terminus, the 359-residue chain is 3-dehydroquinate synthase (359 aa).

Residues 70–75, 104–108, 128–129, K141, and K150 contribute to the NAD(+) site; these read DAEGGK, GAATD, and TT. 3 residues coordinate Zn(2+): E183, H246, and H262.

This sequence belongs to the sugar phosphate cyclases superfamily. Dehydroquinate synthase family. Requires Co(2+) as cofactor. Zn(2+) serves as cofactor. The cofactor is NAD(+).

The protein resides in the cytoplasm. The catalysed reaction is 7-phospho-2-dehydro-3-deoxy-D-arabino-heptonate = 3-dehydroquinate + phosphate. It functions in the pathway metabolic intermediate biosynthesis; chorismate biosynthesis; chorismate from D-erythrose 4-phosphate and phosphoenolpyruvate: step 2/7. Catalyzes the conversion of 3-deoxy-D-arabino-heptulosonate 7-phosphate (DAHP) to dehydroquinate (DHQ). The sequence is that of 3-dehydroquinate synthase from Mycolicibacterium vanbaalenii (strain DSM 7251 / JCM 13017 / BCRC 16820 / KCTC 9966 / NRRL B-24157 / PYR-1) (Mycobacterium vanbaalenii).